A 319-amino-acid chain; its full sequence is ATP-dependent 6-phosphofructokinase (319 aa).

ATP is bound at residue Gly11. 21 to 25 lines the ADP pocket; that stretch reads RAVVR. Residues 72–73 and 102–105 each bind ATP; these read RC and GDGS. Residue Asp103 coordinates Mg(2+). Residue 125-127 participates in substrate binding; the sequence is TID. The Proton acceptor role is filled by Asp127. ADP is bound at residue Arg154. Residues Arg162 and 169–171 contribute to the substrate site; that span reads MGR. ADP is bound by residues 185 to 187, Arg211, and 213 to 215; these read GAE and KKH. Residues Glu222, Arg243, and 249-252 contribute to the substrate site; that span reads HIQR.

It belongs to the phosphofructokinase type A (PFKA) family. ATP-dependent PFK group I subfamily. Prokaryotic clade 'B1' sub-subfamily. Homotetramer. Mg(2+) serves as cofactor.

It localises to the cytoplasm. It carries out the reaction beta-D-fructose 6-phosphate + ATP = beta-D-fructose 1,6-bisphosphate + ADP + H(+). It participates in carbohydrate degradation; glycolysis; D-glyceraldehyde 3-phosphate and glycerone phosphate from D-glucose: step 3/4. Its activity is regulated as follows. Allosterically activated by ADP and other diphosphonucleosides, and allosterically inhibited by phosphoenolpyruvate. Functionally, catalyzes the phosphorylation of D-fructose 6-phosphate to fructose 1,6-bisphosphate by ATP, the first committing step of glycolysis. This chain is ATP-dependent 6-phosphofructokinase, found in Bacillus velezensis (strain DSM 23117 / BGSC 10A6 / LMG 26770 / FZB42) (Bacillus amyloliquefaciens subsp. plantarum).